A 444-amino-acid polypeptide reads, in one-letter code: UDP-N-acetylmuramoylalanine--D-glutamate ligase (444 aa).

109–115 is an ATP binding site; sequence GSNGKTT.

The protein belongs to the MurCDEF family.

The protein localises to the cytoplasm. The enzyme catalyses UDP-N-acetyl-alpha-D-muramoyl-L-alanine + D-glutamate + ATP = UDP-N-acetyl-alpha-D-muramoyl-L-alanyl-D-glutamate + ADP + phosphate + H(+). It functions in the pathway cell wall biogenesis; peptidoglycan biosynthesis. Functionally, cell wall formation. Catalyzes the addition of glutamate to the nucleotide precursor UDP-N-acetylmuramoyl-L-alanine (UMA). The chain is UDP-N-acetylmuramoylalanine--D-glutamate ligase from Bacteroides fragilis (strain ATCC 25285 / DSM 2151 / CCUG 4856 / JCM 11019 / LMG 10263 / NCTC 9343 / Onslow / VPI 2553 / EN-2).